Here is a 269-residue protein sequence, read N- to C-terminus: Prespore protein Dd31 (269 aa).

A compositionally biased stretch (polar residues) spans 1–17 (MEHNNNPGTPQMSSEFP). The disordered stretch occupies residues 1-35 (MEHNNNPGTPQMSSEFPASTTQTSSSAAAYDNSSH). Over residues 18-29 (ASTTQTSSSAAA) the composition is skewed to low complexity. The next 4 membrane-spanning stretches (helical) occupy residues 111-131 (FGIF…VVSI), 139-159 (VDNF…LYFL), 177-197 (YAYL…FVGF), and 225-245 (VSLF…IMYL).

This sequence belongs to the SCAMP family.

The protein localises to the membrane. The protein resides in the spore coat. This is Prespore protein Dd31 (spiA) from Dictyostelium discoideum (Social amoeba).